A 193-amino-acid polypeptide reads, in one-letter code: GTP cyclohydrolase 1 (193 aa).

Residues C83, H86, and C154 each contribute to the Zn(2+) site.

It belongs to the GTP cyclohydrolase I family. In terms of assembly, homomer.

The catalysed reaction is GTP + H2O = 7,8-dihydroneopterin 3'-triphosphate + formate + H(+). Its pathway is cofactor biosynthesis; 7,8-dihydroneopterin triphosphate biosynthesis; 7,8-dihydroneopterin triphosphate from GTP: step 1/1. In Porphyromonas gingivalis (strain ATCC 33277 / DSM 20709 / CIP 103683 / JCM 12257 / NCTC 11834 / 2561), this protein is GTP cyclohydrolase 1.